The sequence spans 296 residues: tRNA dimethylallyltransferase (296 aa).

Residue 19–26 (GPTASGKS) participates in ATP binding. 21-26 (TASGKS) lines the substrate pocket.

The protein belongs to the IPP transferase family. In terms of assembly, monomer. Mg(2+) serves as cofactor.

The catalysed reaction is adenosine(37) in tRNA + dimethylallyl diphosphate = N(6)-dimethylallyladenosine(37) in tRNA + diphosphate. Its function is as follows. Catalyzes the transfer of a dimethylallyl group onto the adenine at position 37 in tRNAs that read codons beginning with uridine, leading to the formation of N6-(dimethylallyl)adenosine (i(6)A). The polypeptide is tRNA dimethylallyltransferase (Dinoroseobacter shibae (strain DSM 16493 / NCIMB 14021 / DFL 12)).